Here is a 180-residue protein sequence, read N- to C-terminus: Probable phospholipid hydroperoxide glutathione peroxidase (180 aa).

Cys-54 is a catalytic residue.

It belongs to the glutathione peroxidase family.

The protein resides in the cytoplasm. It carries out the reaction a hydroperoxy polyunsaturated fatty acid + 2 glutathione = a hydroxy polyunsaturated fatty acid + glutathione disulfide + H2O. Protects cells and enzymes from oxidative damage, by catalyzing the reduction of hydrogen peroxide, lipid peroxides and organic hydroperoxide, by glutathione. In Helianthus annuus (Common sunflower), this protein is Probable phospholipid hydroperoxide glutathione peroxidase (GPXHA-2).